The sequence spans 97 residues: UPF0235 protein HD_0778 (97 aa).

Belongs to the UPF0235 family.

This is UPF0235 protein HD_0778 from Haemophilus ducreyi (strain 35000HP / ATCC 700724).